A 608-amino-acid polypeptide reads, in one-letter code: ATP-binding protein Uup (608 aa).

ABC transporter domains follow at residues 7–217 (APVL…AADA) and 285–512 (VEAK…FAPV). Residues 42 to 49 (GRNGAGKS) and 317 to 324 (GPNGAGKT) contribute to the ATP site. Positions 522 to 608 (AAPAAPKKSA…LEEKKENLAG (87 aa)) are C-terminal domain (CTD), binds DNA.

This sequence belongs to the ABC transporter superfamily. ABCF family. Uup subfamily.

The protein localises to the cytoplasm. It catalyses the reaction ATP + H2O = ADP + phosphate + H(+). Functionally, probably plays a role in ribosome assembly or function. May be involved in resolution of branched DNA intermediates that result from template switching in postreplication gaps. Binds DNA and has ATPase activity. In terms of biological role, one of a cluster of genes involved in attachment of the holdfast to the cell. The holdfast is a structure that allows the bacteria to firmly adhere to surfaces. The sequence is that of ATP-binding protein Uup from Caulobacter vibrioides (strain ATCC 19089 / CIP 103742 / CB 15) (Caulobacter crescentus).